The sequence spans 616 residues: Dihydroxy-acid dehydratase (616 aa).

D81 is a binding site for Mg(2+). C122 is a [2Fe-2S] cluster binding site. The Mg(2+) site is built by D123 and K124. K124 bears the N6-carboxylysine mark. Position 195 (C195) interacts with [2Fe-2S] cluster. E491 serves as a coordination point for Mg(2+). The Proton acceptor role is filled by S517.

Belongs to the IlvD/Edd family. As to quaternary structure, homodimer. The cofactor is [2Fe-2S] cluster. It depends on Mg(2+) as a cofactor.

It catalyses the reaction (2R)-2,3-dihydroxy-3-methylbutanoate = 3-methyl-2-oxobutanoate + H2O. The catalysed reaction is (2R,3R)-2,3-dihydroxy-3-methylpentanoate = (S)-3-methyl-2-oxopentanoate + H2O. Its pathway is amino-acid biosynthesis; L-isoleucine biosynthesis; L-isoleucine from 2-oxobutanoate: step 3/4. The protein operates within amino-acid biosynthesis; L-valine biosynthesis; L-valine from pyruvate: step 3/4. Its function is as follows. Functions in the biosynthesis of branched-chain amino acids. Catalyzes the dehydration of (2R,3R)-2,3-dihydroxy-3-methylpentanoate (2,3-dihydroxy-3-methylvalerate) into 2-oxo-3-methylpentanoate (2-oxo-3-methylvalerate) and of (2R)-2,3-dihydroxy-3-methylbutanoate (2,3-dihydroxyisovalerate) into 2-oxo-3-methylbutanoate (2-oxoisovalerate), the penultimate precursor to L-isoleucine and L-valine, respectively. This Shigella flexneri protein is Dihydroxy-acid dehydratase.